A 120-amino-acid polypeptide reads, in one-letter code: ATP-dependent Clp protease adapter protein ClpS (120 aa).

Belongs to the ClpS family. In terms of assembly, binds to the N-terminal domain of the chaperone ClpA.

Involved in the modulation of the specificity of the ClpAP-mediated ATP-dependent protein degradation. In Pseudomonas syringae pv. tomato (strain ATCC BAA-871 / DC3000), this protein is ATP-dependent Clp protease adapter protein ClpS.